A 361-amino-acid polypeptide reads, in one-letter code: D-alanine--D-alanine ligase (361 aa).

The 211-residue stretch at Lys134–Asp344 folds into the ATP-grasp domain. Ala169–Glu224 lines the ATP pocket. The Mg(2+) site is built by Asp297, Glu311, and Asn313.

Belongs to the D-alanine--D-alanine ligase family. The cofactor is Mg(2+). Mn(2+) is required as a cofactor.

Its subcellular location is the cytoplasm. It carries out the reaction 2 D-alanine + ATP = D-alanyl-D-alanine + ADP + phosphate + H(+). The protein operates within cell wall biogenesis; peptidoglycan biosynthesis. Cell wall formation. This chain is D-alanine--D-alanine ligase, found in Lactobacillus johnsonii (strain CNCM I-12250 / La1 / NCC 533).